The following is a 197-amino-acid chain: Imidazoleglycerol-phosphate dehydratase (197 aa).

The protein belongs to the imidazoleglycerol-phosphate dehydratase family.

It is found in the cytoplasm. The enzyme catalyses D-erythro-1-(imidazol-4-yl)glycerol 3-phosphate = 3-(imidazol-4-yl)-2-oxopropyl phosphate + H2O. The protein operates within amino-acid biosynthesis; L-histidine biosynthesis; L-histidine from 5-phospho-alpha-D-ribose 1-diphosphate: step 6/9. This Marinobacter nauticus (strain ATCC 700491 / DSM 11845 / VT8) (Marinobacter aquaeolei) protein is Imidazoleglycerol-phosphate dehydratase.